A 136-amino-acid chain; its full sequence is Ribonuclease YqgF (136 aa).

Belongs to the YqgF nuclease family. Monomer; also forms low amounts of dimers. The cofactor is Mn(2+).

The protein resides in the cytoplasm. Functionally, has robust sequence-specific RNase activity, acting as a 5'-3' exo/endonuclease on ssRNA substrates with minimally 3 consecutive adenine bases. Has no detectable nuclease activity on dsRNA, dsDNA or Holliday junction DNA. The sequence is that of Ribonuclease YqgF from Deinococcus radiodurans (strain ATCC 13939 / DSM 20539 / JCM 16871 / CCUG 27074 / LMG 4051 / NBRC 15346 / NCIMB 9279 / VKM B-1422 / R1).